The following is a 267-amino-acid chain: Glutamate racemase (267 aa).

Substrate contacts are provided by residues 10-11 (DS) and 42-43 (YG). Catalysis depends on cysteine 73, which acts as the Proton donor/acceptor. 74–75 (NT) contacts substrate. Cysteine 183 (proton donor/acceptor) is an active-site residue. 184–185 (TH) is a binding site for substrate.

This sequence belongs to the aspartate/glutamate racemases family.

The catalysed reaction is L-glutamate = D-glutamate. It functions in the pathway cell wall biogenesis; peptidoglycan biosynthesis. Functionally, provides the (R)-glutamate required for cell wall biosynthesis. The protein is Glutamate racemase of Lactobacillus acidophilus (strain ATCC 700396 / NCK56 / N2 / NCFM).